Reading from the N-terminus, the 215-residue chain is Large ribosomal subunit protein uL3 (215 aa).

Positions 136–155 (GVSISHRSHGSTGQRQDPGK) are disordered. Glutamine 151 carries the post-translational modification N5-methylglutamine.

The protein belongs to the universal ribosomal protein uL3 family. Part of the 50S ribosomal subunit. Forms a cluster with proteins L14 and L19. Methylated by PrmB.

In terms of biological role, one of the primary rRNA binding proteins, it binds directly near the 3'-end of the 23S rRNA, where it nucleates assembly of the 50S subunit. This is Large ribosomal subunit protein uL3 from Rickettsia conorii (strain ATCC VR-613 / Malish 7).